We begin with the raw amino-acid sequence, 317 residues long: Serpentine receptor class delta-46 (317 aa).

A run of 7 helical transmembrane segments spans residues 9-29, 42-62, 91-111, 129-149, 185-205, 239-259, and 269-289; these read FYIIFFLIVFPTQLLLLYVII, IFLCNCSCQIFSMITLVLLQA, YVLCEGTVLMSSILIFITMYV, VIILSLSPLFITMSAEAYLTI, QIVFCTICGFFVIFPLIMFCL, AFLPLFCVCPIFICSFVALIT, and FVSVVLLLPTFFEPYITFYTV.

This sequence belongs to the nematode receptor-like protein srd family.

It is found in the membrane. The chain is Serpentine receptor class delta-46 (srd-46) from Caenorhabditis elegans.